The chain runs to 105 residues: MHIKKGDNVIVISGKDKGKTGVVQSTEPKKDRVVVEGVNIIKKHQKPTQFNPEGGILETEAPIHVSNVQLLDPKTNEPTRVGYKFVDGKKIRIAKKSGEEIKSNN.

The protein belongs to the universal ribosomal protein uL24 family. In terms of assembly, part of the 50S ribosomal subunit.

One of two assembly initiator proteins, it binds directly to the 5'-end of the 23S rRNA, where it nucleates assembly of the 50S subunit. In terms of biological role, one of the proteins that surrounds the polypeptide exit tunnel on the outside of the subunit. The chain is Large ribosomal subunit protein uL24 from Staphylococcus carnosus (strain TM300).